Reading from the N-terminus, the 307-residue chain is Mycothiol acetyltransferase (307 aa).

2 consecutive N-acetyltransferase domains span residues 12–152 (TRTD…APIP) and 160–307 (VTLR…YQRS). Glu43 contributes to the 1D-myo-inositol 2-(L-cysteinylamino)-2-deoxy-alpha-D-glucopyranoside binding site. 87 to 89 (LAV) serves as a coordination point for acetyl-CoA. 3 residues coordinate 1D-myo-inositol 2-(L-cysteinylamino)-2-deoxy-alpha-D-glucopyranoside: Glu187, Lys227, and Glu239. Residues 243-245 (LGV) and 250-256 (HGGGLGK) contribute to the acetyl-CoA site. Tyr278 provides a ligand contact to 1D-myo-inositol 2-(L-cysteinylamino)-2-deoxy-alpha-D-glucopyranoside.

The protein belongs to the acetyltransferase family. MshD subfamily. In terms of assembly, monomer.

The catalysed reaction is 1D-myo-inositol 2-(L-cysteinylamino)-2-deoxy-alpha-D-glucopyranoside + acetyl-CoA = mycothiol + CoA + H(+). Functionally, catalyzes the transfer of acetyl from acetyl-CoA to desacetylmycothiol (Cys-GlcN-Ins) to form mycothiol. This Salinispora arenicola (strain CNS-205) protein is Mycothiol acetyltransferase.